The sequence spans 377 residues: Nitric oxide reductase FlRd-NAD(+) reductase (377 aa).

It belongs to the FAD-dependent oxidoreductase family. FAD serves as cofactor.

The protein localises to the cytoplasm. It carries out the reaction 2 reduced [nitric oxide reductase rubredoxin domain] + NAD(+) + H(+) = 2 oxidized [nitric oxide reductase rubredoxin domain] + NADH. Its pathway is nitrogen metabolism; nitric oxide reduction. In terms of biological role, one of at least two accessory proteins for anaerobic nitric oxide (NO) reductase. Reduces the rubredoxin moiety of NO reductase. The sequence is that of Nitric oxide reductase FlRd-NAD(+) reductase from Salmonella enteritidis PT4 (strain P125109).